A 374-amino-acid polypeptide reads, in one-letter code: Queuine tRNA-ribosyltransferase (374 aa).

The Proton acceptor role is filled by Asp-92. Residues 92-96, Asp-146, Gln-193, and Gly-220 each bind substrate; that span reads DSGGY. The RNA binding stretch occupies residues 251–257; that stretch reads GVGKPDD. The active-site Nucleophile is Asp-270. Positions 275-279 are RNA binding; important for wobble base 34 recognition; the sequence is TRSGR. Positions 308, 310, 313, and 339 each coordinate Zn(2+).

This sequence belongs to the queuine tRNA-ribosyltransferase family. Homodimer. Within each dimer, one monomer is responsible for RNA recognition and catalysis, while the other monomer binds to the replacement base PreQ1. Zn(2+) is required as a cofactor.

The catalysed reaction is 7-aminomethyl-7-carbaguanine + guanosine(34) in tRNA = 7-aminomethyl-7-carbaguanosine(34) in tRNA + guanine. It functions in the pathway tRNA modification; tRNA-queuosine biosynthesis. In terms of biological role, catalyzes the base-exchange of a guanine (G) residue with the queuine precursor 7-aminomethyl-7-deazaguanine (PreQ1) at position 34 (anticodon wobble position) in tRNAs with GU(N) anticodons (tRNA-Asp, -Asn, -His and -Tyr). Catalysis occurs through a double-displacement mechanism. The nucleophile active site attacks the C1' of nucleotide 34 to detach the guanine base from the RNA, forming a covalent enzyme-RNA intermediate. The proton acceptor active site deprotonates the incoming PreQ1, allowing a nucleophilic attack on the C1' of the ribose to form the product. After dissociation, two additional enzymatic reactions on the tRNA convert PreQ1 to queuine (Q), resulting in the hypermodified nucleoside queuosine (7-(((4,5-cis-dihydroxy-2-cyclopenten-1-yl)amino)methyl)-7-deazaguanosine). This is Queuine tRNA-ribosyltransferase from Novosphingobium aromaticivorans (strain ATCC 700278 / DSM 12444 / CCUG 56034 / CIP 105152 / NBRC 16084 / F199).